A 311-amino-acid chain; its full sequence is Methionyl-tRNA formyltransferase (311 aa).

110–113 (SLLP) contacts (6S)-5,6,7,8-tetrahydrofolate.

This sequence belongs to the Fmt family.

The enzyme catalyses L-methionyl-tRNA(fMet) + (6R)-10-formyltetrahydrofolate = N-formyl-L-methionyl-tRNA(fMet) + (6S)-5,6,7,8-tetrahydrofolate + H(+). Functionally, attaches a formyl group to the free amino group of methionyl-tRNA(fMet). The formyl group appears to play a dual role in the initiator identity of N-formylmethionyl-tRNA by promoting its recognition by IF2 and preventing the misappropriation of this tRNA by the elongation apparatus. This chain is Methionyl-tRNA formyltransferase, found in Streptococcus pneumoniae serotype 19F (strain G54).